Here is a 194-residue protein sequence, read N- to C-terminus: Inner membrane-spanning protein YciB (194 aa).

A run of 5 helical transmembrane segments spans residues 1–21, 49–69, 77–97, 120–140, and 150–170; these read MKLLFDFFPIILFFVVYKTTN, EKMHLFALVIVVILGGATILF, WKPSVVCWLLAVVFLIGGWVS, LNYSWVIFNTLLGALNLYVAY, and FKLFGMLGLSLVFALMQGVYI.

The protein belongs to the YciB family.

Its subcellular location is the cell inner membrane. Plays a role in cell envelope biogenesis, maintenance of cell envelope integrity and membrane homeostasis. This is Inner membrane-spanning protein YciB from Hahella chejuensis (strain KCTC 2396).